The following is a 100-amino-acid chain: Small ribosomal subunit protein uS14c (100 aa).

The protein belongs to the universal ribosomal protein uS14 family. Part of the 30S ribosomal subunit.

The protein resides in the plastid. It localises to the chloroplast. Functionally, binds 16S rRNA, required for the assembly of 30S particles. The chain is Small ribosomal subunit protein uS14c from Oltmannsiellopsis viridis (Marine flagellate).